A 157-amino-acid polypeptide reads, in one-letter code: Small ribosomal subunit protein uS7 (157 aa).

It belongs to the universal ribosomal protein uS7 family. In terms of assembly, part of the 30S ribosomal subunit. Contacts proteins S9 and S11.

Functionally, one of the primary rRNA binding proteins, it binds directly to 16S rRNA where it nucleates assembly of the head domain of the 30S subunit. Is located at the subunit interface close to the decoding center, probably blocks exit of the E-site tRNA. The protein is Small ribosomal subunit protein uS7 of Chlamydia felis (strain Fe/C-56) (Chlamydophila felis).